Here is a 247-residue protein sequence, read N- to C-terminus: tRNA (guanine-N(1)-)-methyltransferase (247 aa).

Residues Gly-117 and Leu-136–Leu-141 contribute to the S-adenosyl-L-methionine site.

This sequence belongs to the RNA methyltransferase TrmD family. In terms of assembly, homodimer.

It is found in the cytoplasm. The catalysed reaction is guanosine(37) in tRNA + S-adenosyl-L-methionine = N(1)-methylguanosine(37) in tRNA + S-adenosyl-L-homocysteine + H(+). Specifically methylates guanosine-37 in various tRNAs. The polypeptide is tRNA (guanine-N(1)-)-methyltransferase (Myxococcus xanthus (strain DK1622)).